Consider the following 252-residue polypeptide: Probable endonuclease 4 (252 aa).

Residues His56, His96, Glu129, Asp162, His165, His191, Asp204, His206, and Glu233 each coordinate Zn(2+).

It belongs to the AP endonuclease 2 family. Requires Zn(2+) as cofactor.

The catalysed reaction is Endonucleolytic cleavage to 5'-phosphooligonucleotide end-products.. Functionally, endonuclease IV plays a role in DNA repair. It cleaves phosphodiester bonds at apurinic or apyrimidinic (AP) sites, generating a 3'-hydroxyl group and a 5'-terminal sugar phosphate. The chain is Probable endonuclease 4 from Mycobacterium ulcerans (strain Agy99).